The chain runs to 291 residues: Exosome complex component RRP42 (291 aa).

Ala-2 is subject to N-acetylalanine. Lys-116 carries the N6-acetyllysine modification. Ser-177 carries the phosphoserine modification.

The protein belongs to the RNase PH family. Component of the RNA exosome core complex (Exo-9), composed of EXOSC1, EXOSC2, EXOSC3, EXOSC4, EXOSC5, EXOSC6, EXOSC7, EXOSC8 and EXOSC9; within the complex interacts with EXOSC2 and EXOSC4. The catalytically inactive RNA exosome core complex (Exo-9) associates with the catalytic subunit EXOSC10/RRP6. Exo-9 may associate with DIS3 to form the nucleolar exosome complex, or DIS3L to form the cytoplasmic exosome complex. Exo-9 is formed by a hexameric base ring consisting of the heterodimers EXOSC4-EXOSC9, EXOSC5-EXOSC8 and EXOSC6-EXOSC7, and a cap ring consisting of EXOSC1, EXOSC2 and EXOSC3. The RNA exosome complex associates with cofactors C1D/RRP47, MPHOSPH6/MPP6 and MTREX/MTR4. Interacts with ZC3HAV1. Interacts with DIS3; the interaction is direct.

It is found in the nucleus. The protein localises to the nucleolus. Its subcellular location is the cytoplasm. Non-catalytic component of the RNA exosome complex which has 3'-&gt;5' exoribonuclease activity and participates in a multitude of cellular RNA processing and degradation events. In the nucleus, the RNA exosome complex is involved in proper maturation of stable RNA species such as rRNA, snRNA and snoRNA, in the elimination of RNA processing by-products and non-coding 'pervasive' transcripts, such as antisense RNA species and promoter-upstream transcripts (PROMPTs), and of mRNAs with processing defects, thereby limiting or excluding their export to the cytoplasm. The RNA exosome may be involved in Ig class switch recombination (CSR) and/or Ig variable region somatic hypermutation (SHM) by targeting AICDA deamination activity to transcribed dsDNA substrates. In the cytoplasm, the RNA exosome complex is involved in general mRNA turnover and specifically degrades inherently unstable mRNAs containing AU-rich elements (AREs) within their 3' untranslated regions, and in RNA surveillance pathways, preventing translation of aberrant mRNAs. It seems to be involved in degradation of histone mRNA. The catalytic inactive RNA exosome core complex of 9 subunits (Exo-9) is proposed to play a pivotal role in the binding and presentation of RNA for ribonucleolysis, and to serve as a scaffold for the association with catalytic subunits and accessory proteins or complexes. In Homo sapiens (Human), this protein is Exosome complex component RRP42 (EXOSC7).